The primary structure comprises 311 residues: Mitochondrial arginine transporter BAC1 (311 aa).

Solcar repeat units follow at residues 12 to 101 (FGFY…AKLF), 111 to 203 (PRPE…LRYH), and 219 to 305 (VDMG…SMKM). A run of 6 helical transmembrane segments spans residues 18–38 (YVAGMMAGLATVAVGHPFDTV), 76–96 (GATSSFMGMAFESSLMFGIYS), 113–133 (PEIIVPSAMFGGAIISFVLCP), 178–197 (GGSATLLRECTGNAVFFTVY), 222–242 (GIGVLTGGLGGIACWSAVLPF), and 288–308 (AFPANAAAIVAWEFSMKMLGI).

This sequence belongs to the mitochondrial carrier (TC 2.A.29) family. In terms of tissue distribution, high expression in flowers and siliques. Lower expression in leaves and stems.

The protein localises to the mitochondrion inner membrane. With respect to regulation, inhibited by mercuric chloride. In terms of biological role, mitochondrial arginine transporter that catalyzes the counter-exchange of arginine with lysine, ornithine, arginine and histidine. Substrate preference in reconstituted proteoliposomes is arginine &gt; lysine &gt; ornithine &gt; histidine. May be involved in the delivery of arginine, released from seed reserves, to mitochondrial arginase and the export of ornithine. The polypeptide is Mitochondrial arginine transporter BAC1 (BAC1) (Arabidopsis thaliana (Mouse-ear cress)).